The primary structure comprises 101 residues: Small ribosomal subunit protein uS14 (101 aa).

The segment covering M1–N10 has biased composition (basic and acidic residues). The tract at residues M1 to K23 is disordered.

The protein belongs to the universal ribosomal protein uS14 family. In terms of assembly, part of the 30S ribosomal subunit. Contacts proteins S3 and S10.

Its function is as follows. Binds 16S rRNA, required for the assembly of 30S particles and may also be responsible for determining the conformation of the 16S rRNA at the A site. The polypeptide is Small ribosomal subunit protein uS14 (Nitrobacter hamburgensis (strain DSM 10229 / NCIMB 13809 / X14)).